We begin with the raw amino-acid sequence, 192 residues long: Imidazoleglycerol-phosphate dehydratase (192 aa).

Belongs to the imidazoleglycerol-phosphate dehydratase family.

It is found in the cytoplasm. The enzyme catalyses D-erythro-1-(imidazol-4-yl)glycerol 3-phosphate = 3-(imidazol-4-yl)-2-oxopropyl phosphate + H2O. It functions in the pathway amino-acid biosynthesis; L-histidine biosynthesis; L-histidine from 5-phospho-alpha-D-ribose 1-diphosphate: step 6/9. This chain is Imidazoleglycerol-phosphate dehydratase, found in Staphylococcus epidermidis (strain ATCC 35984 / DSM 28319 / BCRC 17069 / CCUG 31568 / BM 3577 / RP62A).